The chain runs to 950 residues: Translation initiation factor IF-2 (950 aa).

Disordered stretches follow at residues 57–254 (LAER…AVVI) and 304–328 (DVSRDKRRGRQPGRPISEEQAKSLS). 2 stretches are compositionally biased toward low complexity: residues 101–131 (AEPQYAEPQAEQAYEPEPQAAQPEAGAEPAA) and 139–169 (AAPLAAQAAPSPGAEAAAPAAPQAQPAQPAA). A compositionally biased stretch (pro residues) spans 170-215 (PAAPPAPTAQPSAPPPAAAQPRPPQPSAPSRPPPPGYRPAPPPGAR). Residues 216 to 233 (PPVSAAPGAPGQPGAAGQ) are compositionally biased toward low complexity. Residues 449 to 618 (IRPPVVTVMG…ALQSEVLELK (170 aa)) enclose the tr-type G domain. Positions 458–465 (GHVDHGKT) are G1. Residue 458–465 (GHVDHGKT) participates in GTP binding. The interval 483-487 (GITQH) is G2. A G3 region spans residues 504–507 (DTPG). Residues 504–508 (DTPGH) and 558–561 (NKVD) each bind GTP. The tract at residues 558-561 (NKVD) is G4. The tract at residues 594-596 (SAR) is G5.

This sequence belongs to the TRAFAC class translation factor GTPase superfamily. Classic translation factor GTPase family. IF-2 subfamily.

The protein resides in the cytoplasm. One of the essential components for the initiation of protein synthesis. Protects formylmethionyl-tRNA from spontaneous hydrolysis and promotes its binding to the 30S ribosomal subunits. Also involved in the hydrolysis of GTP during the formation of the 70S ribosomal complex. This Anaeromyxobacter dehalogenans (strain 2CP-C) protein is Translation initiation factor IF-2.